The primary structure comprises 222 residues: N-(5'-phosphoribosyl)anthranilate isomerase (222 aa).

Belongs to the TrpF family.

The catalysed reaction is N-(5-phospho-beta-D-ribosyl)anthranilate = 1-(2-carboxyphenylamino)-1-deoxy-D-ribulose 5-phosphate. The protein operates within amino-acid biosynthesis; L-tryptophan biosynthesis; L-tryptophan from chorismate: step 3/5. This chain is N-(5'-phosphoribosyl)anthranilate isomerase, found in Xanthomonas oryzae pv. oryzae (strain PXO99A).